A 73-amino-acid polypeptide reads, in one-letter code: Heterin-2 (73 aa).

The signal sequence occupies residues 1 to 22; it reads MQYKTFLVIFLAYLLVTEEALA. A propeptide spanning residues 47 to 73 is cleaved from the precursor; the sequence is KRALKNIFDPYQKNLDLELERLLSQLQ.

It belongs to the non-disulfide-bridged peptide (NDBP) superfamily. Medium-length antimicrobial peptide (group 3) family. Expressed by the venom gland.

Its subcellular location is the secreted. It is found in the target cell membrane. Its function is as follows. Amphipathic peptide with potent activities against Gram-positive bacteria (MIC=5.6-30.0 uM) and weaker activities against the tested Gram-negative bacteria (MIC=15 uM to &gt;45 uM). It has high hemolytic activity against human erythrocytes. May act by disrupting the integrity of the bacterial cell membrane. In Heterometrus spinifer (Asia giant forest scorpion), this protein is Heterin-2.